Here is a 549-residue protein sequence, read N- to C-terminus: Cation/acetate symporter ActP (549 aa).

13 helical membrane passes run 33-53 (WQAI…TYWA), 77-97 (LAIA…ALVF), 103-123 (GLIY…LIAE), 148-168 (ILSA…QMVG), 183-203 (IAVV…GMLA), 206-226 (WVQI…AFMV), 262-282 (ISAL…PHIL), 303-323 (GFMG…IMLV), 355-375 (LFLG…VAGL), 404-424 (VSKI…MLFE), 428-448 (IAFM…PIIL), 464-484 (GGWL…TIWV), and 493-513 (IFPY…GIWF).

This sequence belongs to the sodium:solute symporter (SSF) (TC 2.A.21) family.

Its subcellular location is the cell inner membrane. Functionally, transports acetate. In Shigella boydii serotype 4 (strain Sb227), this protein is Cation/acetate symporter ActP.